Consider the following 49-residue polypeptide: Large ribosomal subunit protein bL33B (49 aa).

Belongs to the bacterial ribosomal protein bL33 family.

In Bacillus velezensis (strain DSM 23117 / BGSC 10A6 / LMG 26770 / FZB42) (Bacillus amyloliquefaciens subsp. plantarum), this protein is Large ribosomal subunit protein bL33B.